We begin with the raw amino-acid sequence, 332 residues long: Galactosylgalactosylxylosylprotein 3-beta-glucuronosyltransferase 1 (332 aa).

Over 1-6 (MPKRRD) the chain is Cytoplasmic. The tract at residues 3 to 5 (KRR) is essential for transport from endoplasmic reticulum to Golgi apparatus and interaction with SAR1A. The chain crosses the membrane as a helical; Signal-anchor for type II membrane protein span at residues 7 to 27 (ILAIVLIVLPWTLLITVWHQS). Residues 28 to 332 (TLAPLLAVHK…KGFTDPSVEI (305 aa)) lie on the Lumenal side of the membrane. 91-93 (PTY) is a binding site for UDP-alpha-D-glucuronate. Residues T103 and T108 each carry the phosphothreonine modification. Residue D122 participates in UDP-alpha-D-glucuronate binding. Residue N140 is glycosylated (N-linked (GlcNAc...) asparagine). UDP-alpha-D-glucuronate is bound by residues R165 and R170. A glycan (N-linked (GlcNAc...) asparagine) is linked at N184. 195 to 197 (DDD) lines the UDP-alpha-D-glucuronate pocket. D197 is a binding site for Mn(2+). The interaction with galactose moiety of substrate glycoprotein stretch occupies residues 243–252 (FDPHRPFAID). E282 acts as the Proton donor/acceptor in catalysis. N301 is a glycosylation site (N-linked (GlcNAc...) asparagine). 309-311 (HTR) lines the UDP-alpha-D-glucuronate pocket.

Belongs to the glycosyltransferase 43 family. In terms of assembly, homodimer. Interacts with SAR1A. It depends on Mn(2+) as a cofactor. Post-translationally, the soluble form derives from the membrane form by proteolytic processing.

The protein resides in the golgi apparatus membrane. The protein localises to the secreted. It catalyses the reaction 3-O-(beta-D-galactosyl-(1-&gt;3)-beta-D-galactosyl-(1-&gt;4)-beta-D-xylosyl)-L-seryl-[protein] + UDP-alpha-D-glucuronate = 3-O-(beta-D-GlcA-(1-&gt;3)-beta-D-Gal-(1-&gt;3)-beta-D-Gal-(1-&gt;4)-beta-D-Xyl)-L-seryl-[protein] + UDP + H(+). Its pathway is protein modification; protein glycosylation. Functionally, involved in the biosynthesis of L2/HNK-1 carbohydrate epitope on glycoproteins. Can also play a role in glycosaminoglycan biosynthesis. Substrates include asialo-orosomucoid (ASOR), asialo-fetuin, and asialo-neural cell adhesion molecule. Requires sphingomyelin for activity: stearoyl-sphingomyelin was the most effective, followed by palmitoyl-sphingomyelin and lignoceroyl-sphingomyelin. Activity was demonstrated only for sphingomyelin with a saturated fatty acid and not for that with an unsaturated fatty acid, regardless of the length of the acyl group. The polypeptide is Galactosylgalactosylxylosylprotein 3-beta-glucuronosyltransferase 1 (Pan troglodytes (Chimpanzee)).